The sequence spans 715 residues: Fatty acid oxidation complex subunit alpha (715 aa).

Positions 1-190 are enoyl-CoA hydratase/isomerase; that stretch reads MIYQGKAITV…KVGAVDAVVA (190 aa). Asp-297 lines the substrate pocket. The tract at residues 312-715 is 3-hydroxyacyl-CoA dehydrogenase; that stretch reads HDAKQAAVLG…MAKNGQRFFN (404 aa). Residues Met-325, Asp-344, 401–403, Lys-408, and Ser-430 each bind NAD(+); that span reads VVE. His-451 serves as the catalytic For 3-hydroxyacyl-CoA dehydrogenase activity. Residue Asn-454 coordinates NAD(+). Residues Asn-501 and Tyr-660 each contribute to the substrate site.

It in the N-terminal section; belongs to the enoyl-CoA hydratase/isomerase family. In the C-terminal section; belongs to the 3-hydroxyacyl-CoA dehydrogenase family. Heterotetramer of two alpha chains (FadB) and two beta chains (FadA).

The catalysed reaction is a (3S)-3-hydroxyacyl-CoA + NAD(+) = a 3-oxoacyl-CoA + NADH + H(+). It carries out the reaction a (3S)-3-hydroxyacyl-CoA = a (2E)-enoyl-CoA + H2O. It catalyses the reaction a 4-saturated-(3S)-3-hydroxyacyl-CoA = a (3E)-enoyl-CoA + H2O. The enzyme catalyses (3S)-3-hydroxybutanoyl-CoA = (3R)-3-hydroxybutanoyl-CoA. The catalysed reaction is a (3Z)-enoyl-CoA = a 4-saturated (2E)-enoyl-CoA. It carries out the reaction a (3E)-enoyl-CoA = a 4-saturated (2E)-enoyl-CoA. The protein operates within lipid metabolism; fatty acid beta-oxidation. In terms of biological role, involved in the aerobic and anaerobic degradation of long-chain fatty acids via beta-oxidation cycle. Catalyzes the formation of 3-oxoacyl-CoA from enoyl-CoA via L-3-hydroxyacyl-CoA. It can also use D-3-hydroxyacyl-CoA and cis-3-enoyl-CoA as substrate. This chain is Fatty acid oxidation complex subunit alpha, found in Ectopseudomonas oleovorans (Pseudomonas oleovorans).